The primary structure comprises 182 residues: UPF0254 protein MK0012 (182 aa).

It belongs to the UPF0254 family.

In Methanopyrus kandleri (strain AV19 / DSM 6324 / JCM 9639 / NBRC 100938), this protein is UPF0254 protein MK0012.